Consider the following 1443-residue polypeptide: Sterol 3-beta-glucosyltransferase ATG26 (1443 aa).

Residues 1–13 (MATQADDAAASQA) are compositionally biased toward low complexity. Disordered stretches follow at residues 1–69 (MATQ…MFMN) and 88–187 (NDRF…LTLT). Residues 18-32 (GDLKEHVHDELDKIQ) are compositionally biased toward basic and acidic residues. Residues 49 to 58 (DSEDSDDEDN) show a composition bias toward acidic residues. Over residues 104–117 (QNTRTESIARTSIL) the composition is skewed to polar residues. Basic residues predominate over residues 125-134 (DKVHRRRKLS). Residues 164-173 (EVADEADDEH) are compositionally biased toward acidic residues. A GRAM 1 domain is found at 240–284 (LKEIFEFDEYEQVIEEYPCWLLQSVLLQGYMYITSKHICFYAYLP). Positions 289 to 385 (EAVKSGYLSK…WVKSLQRVIF (97 aa)) constitute a PH domain. Residues 463 to 657 (EQVITGDDHD…HGDRHHGIPH (195 aa)) form a disordered region. Residues 506-525 (LAPMSPLSPRSPSQLSPRAS) show a composition bias toward low complexity. A compositionally biased stretch (polar residues) spans 585–614 (SFLQSSIENPSISTLSPSSYDEPSASQILQ). Basic residues predominate over residues 631-642 (SRKRDRSGKRTP). The 106-residue stretch at 765–870 (RFRAHFALPE…DCAVTLHQLM (106 aa)) folds into the GRAM 2 domain. A coiled-coil region spans residues 883 to 910 (DQEEQDDEEAAAAMAERDELQEARQDEF). UDP-alpha-D-glucose-binding residues include S957, R958, D960, A1265, H1267, H1280, S1283, G1284, T1285, D1304, and Q1305. The tract at residues 1385 to 1443 (NAEHGLAEDDDDTEESWTFVGRDEPDPDAVTKKLSDGLAGLGAAGDRPPPLGSQAPTVA) is disordered. Residues 1405–1419 (GRDEPDPDAVTKKLS) are compositionally biased toward basic and acidic residues.

This sequence belongs to the glycosyltransferase 28 family.

The protein resides in the cytoplasm. The protein localises to the preautophagosomal structure membrane. It carries out the reaction a sterol + UDP-alpha-D-glucose = a sterol 3-beta-D-glucoside + UDP + H(+). The enzyme catalyses ergosterol + UDP-alpha-D-glucose = ergosteryl 3-beta-D-glucoside + UDP + H(+). In terms of biological role, sterol glycosyltransferase responsible for the glycosylation of ergosterol to form ergosterol-glucoside. In Gibberella zeae (strain ATCC MYA-4620 / CBS 123657 / FGSC 9075 / NRRL 31084 / PH-1) (Wheat head blight fungus), this protein is Sterol 3-beta-glucosyltransferase ATG26.